Reading from the N-terminus, the 349-residue chain is GDP-mannose:glycolipid 4-beta-D-mannosyltransferase (349 aa).

Positions 1–14 are cleaved as a signal peptide; sequence MSASASLPVTRAAA.

It belongs to the glycosyltransferase 94 family.

It localises to the cell inner membrane. The catalysed reaction is beta-D-GlcA-(1-&gt;2)-alpha-D-Man-(1-&gt;3)-beta-D-Glc-(1-&gt;4)-alpha-D-Glc-di-trans,octa-cis-undecaprenyl diphosphate + GDP-alpha-D-mannose = beta-D-Man-(1-&gt;4)-beta-D-GlcA-(1-&gt;2)-alpha-D-Man-(1-&gt;3)-beta-D-Glc-(1-&gt;4)-alpha-D-Glc-di-trans,octa-cis-undecaprenyl diphosphate + GDP + H(+). The protein operates within glycan biosynthesis; xanthan biosynthesis. Its function is as follows. Nonprocessive beta-mannosyltransferase that catalyzes the transfer of a mannose residue from GDP-mannose to glucuronic acid-beta-1,2-mannose-alpha-1,3-glucose-beta-1,4-glucose-PP-polyisoprenyl to form the lipid-linked pentasaccharide repeating unit of xanthan, Man-GlcA-Man-Glc(2)-PP-Pol. Is involved in the biosynthesis of the exopolysaccharide xanthan. To a lesser extent, can also use ADP-Man and even GDP-Glc as sugar donor substrates in vitro. Is unable to transfer a Man residue to the free-tetrasaccharide GlcA-Man-Glc(2) used as an acceptor, which indicates that the diphosphate group and the lipid moiety in the acceptor substrate are of major importance for acceptor binding and catalysis. This Xanthomonas campestris pv. campestris protein is GDP-mannose:glycolipid 4-beta-D-mannosyltransferase (gumI).